We begin with the raw amino-acid sequence, 143 residues long: Transcriptional regulator MraZ (143 aa).

SpoVT-AbrB domains lie at 5–47 (EFQH…TLTE) and 76–119 (AVEV…DRKL).

This sequence belongs to the MraZ family. As to quaternary structure, forms oligomers.

It is found in the cytoplasm. The protein localises to the nucleoid. The polypeptide is Transcriptional regulator MraZ (Macrococcus caseolyticus (strain JCSC5402) (Macrococcoides caseolyticum)).